Reading from the N-terminus, the 698-residue chain is Nitric oxide-associated protein 1 (698 aa).

A disordered region spans residues 42 to 66 (FQHSSSLGRELPYDPVDTEGFGEGG). Tyr77 bears the Phosphotyrosine mark. Disordered regions lie at residues 80 to 134 (DPEP…DPAL) and 279 to 306 (LAPG…PNWS). A compositionally biased stretch (basic and acidic residues) spans 102 to 126 (ERQRQQRREERRQQNLRARSREHPV). Residues 202–503 (LELVSAALRR…FYDTPGITKE (302 aa)) enclose the CP-type G domain.

This sequence belongs to the TRAFAC class YlqF/YawG GTPase family. NOA1 subfamily. In terms of assembly, homodimer or multimer. Interacts with mitochondrial complex I, DAP3, MRPL12 and MRPS27.

The protein localises to the mitochondrion inner membrane. Its function is as follows. Involved in regulation of mitochondrial protein translation and respiration. Plays a role in mitochondria-mediated cell death. May act as a scaffolding protein or stabilizer of respiratory chain supercomplexes. Binds GTP. The sequence is that of Nitric oxide-associated protein 1 (NOA1) from Homo sapiens (Human).